The following is a 276-amino-acid chain: Ribosomal RNA small subunit methyltransferase A (276 aa).

The S-adenosyl-L-methionine site is built by asparagine 28, leucine 30, glycine 55, glutamate 77, aspartate 103, and asparagine 124.

The protein belongs to the class I-like SAM-binding methyltransferase superfamily. rRNA adenine N(6)-methyltransferase family. RsmA subfamily.

The protein resides in the cytoplasm. It catalyses the reaction adenosine(1518)/adenosine(1519) in 16S rRNA + 4 S-adenosyl-L-methionine = N(6)-dimethyladenosine(1518)/N(6)-dimethyladenosine(1519) in 16S rRNA + 4 S-adenosyl-L-homocysteine + 4 H(+). Functionally, specifically dimethylates two adjacent adenosines (A1518 and A1519) in the loop of a conserved hairpin near the 3'-end of 16S rRNA in the 30S particle. May play a critical role in biogenesis of 30S subunits. The protein is Ribosomal RNA small subunit methyltransferase A of Agrobacterium fabrum (strain C58 / ATCC 33970) (Agrobacterium tumefaciens (strain C58)).